The chain runs to 243 residues: 1-(5-phosphoribosyl)-5-[(5-phosphoribosylamino)methylideneamino] imidazole-4-carboxamide isomerase (243 aa).

Aspartate 8 (proton acceptor) is an active-site residue. Aspartate 129 serves as the catalytic Proton donor.

This sequence belongs to the HisA/HisF family.

It localises to the cytoplasm. It catalyses the reaction 1-(5-phospho-beta-D-ribosyl)-5-[(5-phospho-beta-D-ribosylamino)methylideneamino]imidazole-4-carboxamide = 5-[(5-phospho-1-deoxy-D-ribulos-1-ylimino)methylamino]-1-(5-phospho-beta-D-ribosyl)imidazole-4-carboxamide. The protein operates within amino-acid biosynthesis; L-histidine biosynthesis; L-histidine from 5-phospho-alpha-D-ribose 1-diphosphate: step 4/9. This is 1-(5-phosphoribosyl)-5-[(5-phosphoribosylamino)methylideneamino] imidazole-4-carboxamide isomerase from Nitratidesulfovibrio vulgaris (strain DSM 19637 / Miyazaki F) (Desulfovibrio vulgaris).